Here is a 156-residue protein sequence, read N- to C-terminus: Cellulose synthase operon protein D (156 aa).

It participates in glycan metabolism; bacterial cellulose biosynthesis. In terms of biological role, may have a major role in the perfection of crystallization, involved either in the pore structure itself or in the organization of the pores within the linear array of terminal synthesizing complexes (TCs). This is Cellulose synthase operon protein D from Komagataeibacter xylinus (Gluconacetobacter xylinus).